A 516-amino-acid chain; its full sequence is D-aminopeptidase (516 aa).

Catalysis depends on Ser-61, which acts as the Nucleophile. Catalysis depends on Lys-64, which acts as the Proton donor/acceptor. The tract at residues 476 to 486 (RRSMDAPAPGD) is important for specificity. Asp-480 contributes to the substrate binding site.

Belongs to the peptidase S12 family. As to quaternary structure, homodimer.

The enzyme catalyses Release of an N-terminal D-amino acid from a peptide, Xaa-|-Yaa-, in which Xaa is preferably D-Ala, D-Ser or D-Thr. D-amino acid amides and methyl esters also are hydrolyzed, as is glycine amide.. Its activity is regulated as follows. Inhibited by beta-lactam compounds such as 6-aminopenicillic acid, 7-aminocephalosporanic acid, benzylpenicillin and ampicillin. Inhibited by p-chloromercuribenzoate. In terms of biological role, hydrolyzes N-terminal residues in D-amino acid-containing peptides. The sequence is that of D-aminopeptidase from Cereibacter sphaeroides (strain ATCC 17023 / DSM 158 / JCM 6121 / CCUG 31486 / LMG 2827 / NBRC 12203 / NCIMB 8253 / ATH 2.4.1.) (Rhodobacter sphaeroides).